A 151-amino-acid chain; its full sequence is RNA polymerase-binding transcription factor DksA (151 aa).

Cys114, Cys117, Cys135, and Cys138 together coordinate Zn(2+). The segment at 114–138 (CNSCAVEIGIRRLEARPTANLCIDC) adopts a dksA C4-type zinc-finger fold.

Belongs to the DksA family. As to quaternary structure, interacts directly with the RNA polymerase.

It is found in the cytoplasm. Functionally, transcription factor that acts by binding directly to the RNA polymerase (RNAP). Required for negative regulation of rRNA expression and positive regulation of several amino acid biosynthesis promoters. Also required for regulation of fis expression. The polypeptide is RNA polymerase-binding transcription factor DksA (Buchnera aphidicola subsp. Schizaphis graminum (strain Sg)).